We begin with the raw amino-acid sequence, 59 residues long: Large ribosomal subunit protein bL32 (59 aa).

The protein belongs to the bacterial ribosomal protein bL32 family.

This chain is Large ribosomal subunit protein bL32, found in Mycoplasma capricolum subsp. capricolum (strain California kid / ATCC 27343 / NCTC 10154).